An 815-amino-acid chain; its full sequence is Serotype-specific mannosyltransferase WbdA (815 aa).

Residues 1–374 (MSRAIIENAG…WANTAHLAIE (374 aa)) form an alpha-(1-&gt;2)-mannosyltransferase region. The interval 431 to 804 (KLLVDISVLA…WKQSAEFLLK (374 aa)) is alpha-(1-&gt;3)-mannosyltransferase.

This sequence belongs to the glycosyltransferase group 1 family. Glycosyltransferase 4 subfamily. In terms of assembly, monomer. Interacts with the C-terminal region of WbdD.

Its subcellular location is the cell inner membrane. The catalysed reaction is [alpha-D-Man-(1-&gt;3)-alpha-D-Man-(1-&gt;3)-alpha-D-Man-(1-&gt;2)-alpha-D-Man-(1-&gt;2)](n)-alpha-D-Man-(1-&gt;3)-alpha-D-Man-(1-&gt;3)-alpha-D-Man-(1-&gt;3)-alpha-D-GlcNAc-di-trans,octa-cis-undecaprenyl diphosphate + 2 GDP-alpha-D-mannose = alpha-D-Man-(1-&gt;2)-alpha-D-Man-(1-&gt;2)-[alpha-D-Man-(1-&gt;3)-alpha-D-Man-(1-&gt;3)-alpha-D-Man-(1-&gt;2)-alpha-D-Man-(1-&gt;2)](n)-alpha-D-Man-(1-&gt;3)-alpha-D-Man-(1-&gt;3)-alpha-D-Man-(1-&gt;3)-alpha-D-GlcNAc-di-trans,octa-cis-undecaprenyl diphosphate + 2 GDP + 2 H(+). It catalyses the reaction alpha-D-Man-(1-&gt;2)-alpha-D-Man-(1-&gt;2)-[alpha-D-Man-(1-&gt;3)-alpha-D-Man-(1-&gt;3)-alpha-D-Man-(1-&gt;2)-alpha-D-Man-(1-&gt;2)](n)-alpha-D-Man-(1-&gt;3)-alpha-D-Man-(1-&gt;3)-alpha-D-Man-(1-&gt;3)-alpha-D-GlcNAc-di-trans,octa-cis-undecaprenyl diphosphate + 2 GDP-alpha-D-mannose = [alpha-D-Man-(1-&gt;3)-alpha-D-Man-(1-&gt;3)-alpha-D-Man-(1-&gt;2)-alpha-D-Man-(1-&gt;2)](n+1)-alpha-D-Man-(1-&gt;3)-alpha-D-Man-(1-&gt;3)-alpha-D-Man-(1-&gt;3)-alpha-D-GlcNAc-di-trans,octa-cis-undecaprenyl diphosphate + 2 GDP + 2 H(+). It participates in bacterial outer membrane biogenesis; LPS O-antigen biosynthesis. Mannosyltransferase involved in the biosynthesis of the repeat unit of the lipopolysaccharide (LPS) O-antigen region. Catalyzes the polymerization of a tetrasaccharide repeat unit containing two alpha-(1-&gt;3)- and two alpha-(1-&gt;2)-linked mannopyranose residues. This Escherichia coli protein is Serotype-specific mannosyltransferase WbdA.